Here is a 225-residue protein sequence, read N- to C-terminus: PKHD-type hydroxylase YbiX (225 aa).

Residues 78–177 (TLSTPLFNRY…RVASFMWIQS (100 aa)) form the Fe2OG dioxygenase domain. Positions 96, 98, and 158 each coordinate Fe cation. Position 168 (R168) interacts with 2-oxoglutarate.

It depends on Fe(2+) as a cofactor. L-ascorbate serves as cofactor.

The polypeptide is PKHD-type hydroxylase YbiX (Escherichia coli O17:K52:H18 (strain UMN026 / ExPEC)).